The chain runs to 254 residues: 3-oxo-5-alpha-steroid 4-dehydrogenase 2 (254 aa).

The next 4 membrane-spanning stretches (helical) occupy residues 8–28 (VPVL…LCFG), 72–92 (PRSL…AHYF), 146–166 (FSVG…SDCM), and 206–226 (LATW…FLGM).

Belongs to the steroid 5-alpha reductase family.

Its subcellular location is the microsome membrane. The protein resides in the endoplasmic reticulum membrane. The enzyme catalyses a 3-oxo-5alpha-steroid + NADP(+) = a 3-oxo-Delta(4)-steroid + NADPH + H(+). It catalyses the reaction 17beta-hydroxy-5alpha-androstan-3-one + NADP(+) = testosterone + NADPH + H(+). It carries out the reaction 5alpha-pregnane-3,20-dione + NADP(+) = progesterone + NADPH + H(+). Its function is as follows. Converts testosterone (T) into 5-alpha-dihydrotestosterone (DHT) and progesterone or corticosterone into their corresponding 5-alpha-3-oxosteroids. It plays a central role in sexual differentiation and androgen physiology. In Mus musculus (Mouse), this protein is 3-oxo-5-alpha-steroid 4-dehydrogenase 2 (Srd5a2).